The following is a 280-amino-acid chain: Fructose-1,6-bisphosphatase class 1 (280 aa).

Glu-64, Asp-83, Leu-85, and Asp-86 together coordinate Mg(2+). Residues 86–89 (DGSS), Tyr-190, and Lys-221 contribute to the substrate site. Glu-227 serves as a coordination point for Mg(2+).

Belongs to the FBPase class 1 family. As to quaternary structure, homotetramer. Mg(2+) serves as cofactor.

Its subcellular location is the cytoplasm. The enzyme catalyses beta-D-fructose 1,6-bisphosphate + H2O = beta-D-fructose 6-phosphate + phosphate. The protein operates within carbohydrate biosynthesis; gluconeogenesis. This Campylobacter hominis (strain ATCC BAA-381 / DSM 21671 / CCUG 45161 / LMG 19568 / NCTC 13146 / CH001A) protein is Fructose-1,6-bisphosphatase class 1.